The sequence spans 340 residues: Ketol-acid reductoisomerase (NADP(+)) (340 aa).

Residues 3 to 182 (VQMEYEKDVK…GAARVGLLET (180 aa)) form the KARI N-terminal Rossmann domain. NADP(+) is bound by residues 26-29 (YGSQ), Arg-49, Ser-53, and 83-86 (DEIQ). Residue His-108 is part of the active site. Gly-134 is a binding site for NADP(+). A KARI C-terminal knotted domain is found at 183–328 (TYKEETEEDL…AELRKAMPFV (146 aa)). Mg(2+)-binding residues include Asp-191, Glu-195, Glu-227, and Glu-231. Residue Ser-252 coordinates substrate.

It belongs to the ketol-acid reductoisomerase family. It depends on Mg(2+) as a cofactor.

It carries out the reaction (2R)-2,3-dihydroxy-3-methylbutanoate + NADP(+) = (2S)-2-acetolactate + NADPH + H(+). It catalyses the reaction (2R,3R)-2,3-dihydroxy-3-methylpentanoate + NADP(+) = (S)-2-ethyl-2-hydroxy-3-oxobutanoate + NADPH + H(+). Its pathway is amino-acid biosynthesis; L-isoleucine biosynthesis; L-isoleucine from 2-oxobutanoate: step 2/4. It functions in the pathway amino-acid biosynthesis; L-valine biosynthesis; L-valine from pyruvate: step 2/4. Involved in the biosynthesis of branched-chain amino acids (BCAA). Catalyzes an alkyl-migration followed by a ketol-acid reduction of (S)-2-acetolactate (S2AL) to yield (R)-2,3-dihydroxy-isovalerate. In the isomerase reaction, S2AL is rearranged via a Mg-dependent methyl migration to produce 3-hydroxy-3-methyl-2-ketobutyrate (HMKB). In the reductase reaction, this 2-ketoacid undergoes a metal-dependent reduction by NADPH to yield (R)-2,3-dihydroxy-isovalerate. This chain is Ketol-acid reductoisomerase (NADP(+)), found in Streptococcus pneumoniae (strain Hungary19A-6).